The sequence spans 309 residues: Coenzyme PQQ synthesis protein B (309 aa).

Belongs to the PqqB family.

Its pathway is cofactor biosynthesis; pyrroloquinoline quinone biosynthesis. In terms of biological role, may be involved in the transport of PQQ or its precursor to the periplasm. The protein is Coenzyme PQQ synthesis protein B of Nitrosococcus oceani (strain ATCC 19707 / BCRC 17464 / JCM 30415 / NCIMB 11848 / C-107).